A 443-amino-acid polypeptide reads, in one-letter code: Transcriptional adapter 2-alpha (443 aa).

Ser-6 is modified (phosphoserine). Residues 12 to 69 form a ZZ-type zinc finger; sequence SDKPPCRGCSSYLMEPYIKCAECGPPPFFLCLQCFTRGFEYKKHQSDHTYEIMTSDFP. Zn(2+) contacts are provided by Cys-17, Cys-20, Cys-31, Cys-34, Cys-42, Cys-45, His-55, and His-59. Residues 70-122 form the SANT domain; that stretch reads VLDPSWTAQEEMALLEAVMDCGFGNWQDVANQMCTKTKEECEKHYMKHFINNP. Residues Lys-132 and Lys-138 each participate in a glycyl lysine isopeptide (Lys-Gly) (interchain with G-Cter in SUMO2) cross-link. The span at 347–359 shows a compositional bias: polar residues; it reads LSPSVPMTSNSGR. The segment at 347-372 is disordered; it reads LSPSVPMTSNSGRRSAPPLNLTGLPG. Residues 356-443 enclose the SWIRM domain; the sequence is NSGRRSAPPL…LIREGYITKA (88 aa). A DNA-binding region spans residues 426–435; that stretch reads KTRKIYDFLI.

In terms of assembly, interacts with GCN5 and NR3C1. Associated with the P/CAF protein in the PCAF complex. Component of the PCAF complex, at least composed of TADA2L/ADA2, TADA3L/ADA3, TAF5L/PAF65-beta, TAF6L/PAF65-alpha, TAF10/TAFII30, TAF12/TAFII20, TAF9/TAFII31 and TRRAP. Component of the ADA2A-containing complex (ATAC), composed of KAT14, KAT2A, TADA2L, TADA3L, ZZ3, MBIP, WDR5, YEATS2, CCDC101 and DR1. Interacts with CCDC134.

It is found in the nucleus. It localises to the chromosome. In terms of biological role, component of the ATAC complex, a complex with histone acetyltransferase activity on histones H3 and H4. Required for the function of some acidic activation domains, which activate transcription from a distant site. Binds double-stranded DNA. Binds dinucleosomes, probably at the linker region between neighboring nucleosomes. Plays a role in chromatin remodeling. May promote TP53/p53 'Lys-321' acetylation, leading to reduced TP53 stability and transcriptional activity. May also promote XRCC6 acetylation thus facilitating cell apoptosis in response to DNA damage. This chain is Transcriptional adapter 2-alpha (TADA2A), found in Bos taurus (Bovine).